The sequence spans 97 residues: Large ribosomal subunit protein bL28 (97 aa).

The protein belongs to the bacterial ribosomal protein bL28 family.

The protein is Large ribosomal subunit protein bL28 of Rickettsia bellii (strain OSU 85-389).